The sequence spans 1017 residues: Probable disease resistance protein RDL5 (1017 aa).

Residues 25-52 (QGVEDQVTELKRDLNMLSSFLKDANAKK) are a coiled coil. The NB-ARC domain maps to 147–460 (KQREMRQKFS…AEGIFQPRHY (314 aa)). 190-197 (GMGGLGKT) serves as a coordination point for ATP. LRR repeat units lie at residues 602–627 (LIHL…NLKL), 649–674 (MQEL…NLVK), 675–699 (LETL…RLST), 768–791 (PSHL…ILEK), 792–819 (LLQL…GFPQ), 841–865 (MPLL…HLPS), and 937–962 (MPFL…QFIY).

The protein belongs to the disease resistance NB-LRR family.

Functionally, potential disease resistance protein. This Arabidopsis thaliana (Mouse-ear cress) protein is Probable disease resistance protein RDL5 (RDL5).